The following is a 186-amino-acid chain: ATP synthase subunit delta (186 aa).

Belongs to the ATPase delta chain family. F-type ATPases have 2 components, F(1) - the catalytic core - and F(0) - the membrane proton channel. F(1) has five subunits: alpha(3), beta(3), gamma(1), delta(1), epsilon(1). F(0) has three main subunits: a(1), b(2) and c(10-14). The alpha and beta chains form an alternating ring which encloses part of the gamma chain. F(1) is attached to F(0) by a central stalk formed by the gamma and epsilon chains, while a peripheral stalk is formed by the delta and b chains.

It localises to the cell membrane. F(1)F(0) ATP synthase produces ATP from ADP in the presence of a proton or sodium gradient. F-type ATPases consist of two structural domains, F(1) containing the extramembraneous catalytic core and F(0) containing the membrane proton channel, linked together by a central stalk and a peripheral stalk. During catalysis, ATP synthesis in the catalytic domain of F(1) is coupled via a rotary mechanism of the central stalk subunits to proton translocation. In terms of biological role, this protein is part of the stalk that links CF(0) to CF(1). It either transmits conformational changes from CF(0) to CF(1) or is implicated in proton conduction. In Mycoplasmopsis agalactiae (strain NCTC 10123 / CIP 59.7 / PG2) (Mycoplasma agalactiae), this protein is ATP synthase subunit delta.